Here is a 102-residue protein sequence, read N- to C-terminus: Transposable element activator uncharacterized 12 kDa protein (102 aa).

A compositionally biased stretch (basic residues) spans 24-51 (HNHNQNHNHSHNLNPKKKHHRRGQRSAH). The interval 24–55 (HNHNQNHNHSHNLNPKKKHHRRGQRSAHRMYG) is disordered.

The polypeptide is Transposable element activator uncharacterized 12 kDa protein (Zea mays (Maize)).